The sequence spans 88 residues: Arminin 1c (88 aa).

Positions 1–18 are cleaved as a signal peptide; it reads MKPVFVILFLTCIAFTYA. Positions 19–57 are excised as a propeptide; the sequence is ESYEDVKEEIKNEVEREIFEDLEEESDVLDSNVREFNDA. Val-85 carries the post-translational modification Valine amide.

Belongs to the arminin family. In terms of tissue distribution, expressed in entodermal epithelium along the body column.

It localises to the secreted. The protein localises to the target cell membrane. In terms of biological role, antimicrobial peptide with a broad-spectrum antimicrobial activity. Keeps its antibacterial activity under a wide range of salt concentrations that mimic physiological conditions of human blood, which is surprising, since Hydra is an obligate freshwater animal with nearly no salt tolerance. Does not affect red blood cells. In Hydra vulgaris (Hydra), this protein is Arminin 1c.